A 379-amino-acid chain; its full sequence is Alcohol dehydrogenase 2 (379 aa).

Cys48 lines the Zn(2+) pocket. His49–Leu53 contributes to the NAD(+) binding site. Residues His69, Cys100, Cys103, Cys106, Cys114, and Cys178 each contribute to the Zn(2+) site. Residues Gly203 to Gly208, Asp227, Lys232, Thr275 to Ile277, Ile298 to Ala300, and Thr321 to Phe323 each bind NAD(+).

Belongs to the zinc-containing alcohol dehydrogenase family. Class-IV subfamily. Homodimer. Zn(2+) serves as cofactor. As to expression, expressed in flowers and disk florets.

It catalyses the reaction (R,R)-chrysanthemol + NAD(+) = (1R,3R)-chrysanthemal + NADH + H(+). The catalysed reaction is nerol + NAD(+) = neral + NADH + H(+). The enzyme catalyses (S)-(-)-citronellol + NAD(+) = (S)-(-)-citronellal + NADH + H(+). It carries out the reaction perillyl alcohol + NAD(+) = perillyl aldehyde + NADH + H(+). It catalyses the reaction (6E)-8-hydroxygeraniol + NAD(+) = (6E)-8-hydroxygeranial + NADH + H(+). The catalysed reaction is (2E)-geraniol + NAD(+) = (2E)-geranial + NADH + H(+). Its pathway is isoprenoid biosynthesis. Its function is as follows. Component of the monoterpenoid pyrethrins biosynthesis; pyrethrins are widely used plant-derived pesticide. Mediates the conversion of trans-chrysanthemol into trans-chrysanthemal. The polypeptide is Alcohol dehydrogenase 2 (Tanacetum cinerariifolium (Dalmatian daisy)).